The following is a 119-amino-acid chain: Large ribosomal subunit protein bL20 (119 aa).

Belongs to the bacterial ribosomal protein bL20 family.

Binds directly to 23S ribosomal RNA and is necessary for the in vitro assembly process of the 50S ribosomal subunit. It is not involved in the protein synthesizing functions of that subunit. This chain is Large ribosomal subunit protein bL20, found in Bacillus pumilus (strain SAFR-032).